The chain runs to 503 residues: Alpha-1-syntrophin (503 aa).

2 PH domains span residues Arg6–Gly263 and Asp287–His399. Residues Leu40 to Pro68 are disordered. Residues Arg81 to Lys164 enclose the PDZ domain. A phosphoserine mark is found at Ser95, Ser178, Ser183, Ser187, and Ser194. Residues Thr177–Leu203 form a disordered region. One can recognise an SU domain in the interval Pro447–Ala503. Residues Pro481–Ala503 form a calmodulin-binding region.

The protein belongs to the syntrophin family. As to quaternary structure, monomer and homodimer. Interacts with MAPK12, TGFA, GA and F-actin. Interacts with the other members of the syntrophin family: SNTB1 and SNTB2; with dystrophin protein DMD and related proteins DTNA and UTRN; SGCG and SGCA of the dystrophin glycoprotein complex; NOS1; GRB2; calmodulin and the sodium channel proteins SCN4A and SCN5A. Interacts with MYOC; regulates muscle hypertrophy. Interacts with DTNB. Post-translationally, phosphorylated by CaM-kinase II. Phosphorylation may inhibit the interaction with DMD. As to expression, high expression in skeletal muscle. Expressed at intermediate level in heart, kidney and brain, and at low level in intestine, liver, lung and testis.

The protein localises to the cell membrane. It localises to the sarcolemma. The protein resides in the cell junction. It is found in the cytoplasm. Its subcellular location is the cytoskeleton. In terms of biological role, adapter protein that binds to and probably organizes the subcellular localization of a variety of membrane proteins. May link various receptors to the actin cytoskeleton and the extracellular matrix via the dystrophin glycoprotein complex. Plays an important role in synapse formation and in the organization of UTRN and acetylcholine receptors at the neuromuscular synapse. Binds to phosphatidylinositol 4,5-bisphosphate. This chain is Alpha-1-syntrophin (Snta1), found in Mus musculus (Mouse).